Reading from the N-terminus, the 931-residue chain is Aconitate hydratase A (931 aa).

A disordered region spans residues 402-454; that stretch reads SASPVDEASAESFPASDAPAYGSQENGAGAPQHADGTGAAVPSNPVTVTAPDG. [4Fe-4S] cluster is bound by residues Cys-472, Cys-538, and Cys-541.

The protein belongs to the aconitase/IPM isomerase family. [4Fe-4S] cluster is required as a cofactor.

The catalysed reaction is citrate = D-threo-isocitrate. It catalyses the reaction citrate = cis-aconitate + H2O. The enzyme catalyses cis-aconitate + H2O = D-threo-isocitrate. It functions in the pathway carbohydrate metabolism; tricarboxylic acid cycle; isocitrate from oxaloacetate: step 2/2. Functionally, catalyzes the reversible isomerization of citrate to isocitrate via cis-aconitate in the tricarboxylic acid (TCA) cycle. Aconitase activity is important for the initiation of morphological and physiological differentiation of S.viridochromogenes. In addition, the apo form of AcnA (lacking the [4Fe-4S] cluster) functions as a RNA-binding regulatory protein, which binds to iron responsive elements (IREs) located on the untranslated region of certain mRNAs, including recA and ftsZ. Binding to IRE-like structures probably alters the target mRNA stability and regulates the protein amount. The apo form plays a regulatory role in oxidative stress response. The protein is Aconitate hydratase A of Streptomyces viridochromogenes (strain DSM 40736 / JCM 4977 / BCRC 1201 / Tue 494).